We begin with the raw amino-acid sequence, 185 residues long: Der GTPase-activating protein YihI (185 aa).

Disordered stretches follow at residues 1-74 (MGRS…KKKI) and 145-169 (EPED…SSDE). Residues 23-33 (NRSESDVEGRE) show a composition bias toward basic and acidic residues. The span at 34 to 47 (RKRVKKRKGLKSGS) shows a compositional bias: basic residues. Residues 48–68 (RHSDGSEAKQRKAALARDPRL) show a composition bias toward basic and acidic residues. The segment covering 145–155 (EPEDDEEEIFE) has biased composition (acidic residues).

It belongs to the YihI family. Interacts with Der.

Functionally, a GTPase-activating protein (GAP) that modifies Der/EngA GTPase function. May play a role in ribosome biogenesis. This is Der GTPase-activating protein YihI from Vibrio atlanticus (strain LGP32) (Vibrio splendidus (strain Mel32)).